We begin with the raw amino-acid sequence, 873 residues long: Bifunctional uridylyltransferase/uridylyl-removing enzyme (873 aa).

The interval 1–332 is uridylyltransferase; sequence MAFQSPLTFN…NGGETEPAVI (332 aa). The uridylyl-removing stretch occupies residues 333–692; sequence INEDFQRRGR…MSKKATRGGT (360 aa). The HD domain occupies 451–573; sequence VDEHSVRLLN…VRDEERLEYL (123 aa). ACT domains lie at 693–773 and 800–873; these read EVFV…VKTR and LMEL…ELAP.

It belongs to the GlnD family. Requires Mg(2+) as cofactor.

It catalyses the reaction [protein-PII]-L-tyrosine + UTP = [protein-PII]-uridylyl-L-tyrosine + diphosphate. It carries out the reaction [protein-PII]-uridylyl-L-tyrosine + H2O = [protein-PII]-L-tyrosine + UMP + H(+). With respect to regulation, uridylyltransferase (UTase) activity is inhibited by glutamine, while glutamine activates uridylyl-removing (UR) activity. Functionally, modifies, by uridylylation and deuridylylation, the PII regulatory proteins (GlnB and homologs), in response to the nitrogen status of the cell that GlnD senses through the glutamine level. Under low glutamine levels, catalyzes the conversion of the PII proteins and UTP to PII-UMP and PPi, while under higher glutamine levels, GlnD hydrolyzes PII-UMP to PII and UMP (deuridylylation). Thus, controls uridylylation state and activity of the PII proteins, and plays an important role in the regulation of nitrogen assimilation and metabolism. The polypeptide is Bifunctional uridylyltransferase/uridylyl-removing enzyme (Vibrio vulnificus (strain YJ016)).